A 290-amino-acid chain; its full sequence is 4-hydroxybenzoate octaprenyltransferase (290 aa).

A run of 6 helical transmembrane segments spans residues 41–61 (WPLLAIFALGTLLMRSAGCAM), 89–109 (WEAVAIAVVLAFISFLLIQPL), 133–153 (FFAIPQAYLGIAFGFGIPMAF), 158–178 (DTVPMLAWVMLIANIFWSVAY), 202–224 (FGRFDVAAVMLCYAATLGIYVWI), and 269–289 (WLGGVLFAGIAAHYLLAGTAG).

Belongs to the UbiA prenyltransferase family. Requires Mg(2+) as cofactor.

Its subcellular location is the cell inner membrane. It carries out the reaction all-trans-octaprenyl diphosphate + 4-hydroxybenzoate = 4-hydroxy-3-(all-trans-octaprenyl)benzoate + diphosphate. It participates in cofactor biosynthesis; ubiquinone biosynthesis. Catalyzes the prenylation of para-hydroxybenzoate (PHB) with an all-trans polyprenyl group. Mediates the second step in the final reaction sequence of ubiquinone-8 (UQ-8) biosynthesis, which is the condensation of the polyisoprenoid side chain with PHB, generating the first membrane-bound Q intermediate 3-octaprenyl-4-hydroxybenzoate. The sequence is that of 4-hydroxybenzoate octaprenyltransferase from Burkholderia ambifaria (strain MC40-6).